The following is a 552-amino-acid chain: ATP synthase subunit alpha (552 aa).

173 to 180 (GDRQTGKS) contacts ATP. A disordered region spans residues 509–552 (KPQFSGGSKGSNVPKDVDAGATDADDISQEKITTRKGGATAARG).

This sequence belongs to the ATPase alpha/beta chains family. F-type ATPases have 2 components, CF(1) - the catalytic core - and CF(0) - the membrane proton channel. CF(1) has five subunits: alpha(3), beta(3), gamma(1), delta(1), epsilon(1). CF(0) has three main subunits: a(1), b(2) and c(9-12). The alpha and beta chains form an alternating ring which encloses part of the gamma chain. CF(1) is attached to CF(0) by a central stalk formed by the gamma and epsilon chains, while a peripheral stalk is formed by the delta and b chains.

The protein localises to the cell membrane. The enzyme catalyses ATP + H2O + 4 H(+)(in) = ADP + phosphate + 5 H(+)(out). In terms of biological role, produces ATP from ADP in the presence of a proton gradient across the membrane. The alpha chain is a regulatory subunit. The sequence is that of ATP synthase subunit alpha from Kineococcus radiotolerans (strain ATCC BAA-149 / DSM 14245 / SRS30216).